Here is a 347-residue protein sequence, read N- to C-terminus: Gibberellin 3-beta-dioxygenase 2 (347 aa).

The 105-residue stretch at 197–301 (DFQGTQAVIQ…RFSMAYLWGP (105 aa)) folds into the Fe2OG dioxygenase domain. H225, D227, and H282 together coordinate Fe cation. R292 is a catalytic residue. R292 contacts 2-oxoglutarate.

It belongs to the iron/ascorbate-dependent oxidoreductase family. GA3OX subfamily. L-ascorbate is required as a cofactor. The cofactor is Fe(2+). In terms of tissue distribution, highly expressed in seedlings but also expressed in roots, leaves, stems, flowers, siliques and seeds. Detected predominantly in the hypocotyl and roots of young seedlings and in the petioles and vasculature of leaves. Not expressed in the shoot apical meristem, but found in the elongation zone, the quiescent center cells and the columella cells of the root tips. Found in the cortex and the endodermis of the embryo axis in germinating seeds.

It carries out the reaction gibberellin A20 + 2-oxoglutarate + O2 = gibberellin A1 + succinate + CO2. It participates in plant hormone biosynthesis; gibberellin biosynthesis. In terms of biological role, converts the inactive gibberellin (GA) precursors GA9 and GA20 in the bioactives gibberellins GA4 and GA1. Involved in the production of bioactive GA for vegetative growth and development. The chain is Gibberellin 3-beta-dioxygenase 2 from Arabidopsis thaliana (Mouse-ear cress).